Reading from the N-terminus, the 420-residue chain is MVEQDPFEIAVKQLERAAQYMKISEEALEFLKRPQRIVEVTIPVEMDDGSVKVFTGFRVQYNWARGPTKGGIRWHPEETLSTVKALAAWMTWKTAVMDLPYGGGKGGIIVDPKKLSDREKERLARGYIRAIYDVISPYEDIPAPDVYTNPQIMAWMMDEYETIARRKTPAFGIITGKPLSIGGSLGRNEATARGASYTIREAAKVLGWDDLKGKTIAIQGYGNAGYYLAKIMSEDYGMKVVAVSDSKGGIYNPDGLNADEVLKWKREHGSVKDFPGATNITNEELLELEVDVLAPAAIEEVITKKNADNIKAKIVAEVANGPVTPEADEILFEKGILQIPDFLCNAGGVTVSYFEWVQNITGYYWTLEEVREKLDKKMTKAFYDVYNTAKEKNIHMRDAAYVVAVQRVYQAMLDRGWVKH.

Lys-105 is a catalytic residue. 220–226 (GYGNAGY) serves as a coordination point for NAD(+).

This sequence belongs to the Glu/Leu/Phe/Val dehydrogenases family. Homohexamer.

It localises to the cytoplasm. The catalysed reaction is L-glutamate + NAD(+) + H2O = 2-oxoglutarate + NH4(+) + NADH + H(+). It catalyses the reaction L-glutamate + NADP(+) + H2O = 2-oxoglutarate + NH4(+) + NADPH + H(+). This Pyrococcus abyssi (strain GE5 / Orsay) protein is Glutamate dehydrogenase (gdhA).